A 183-amino-acid polypeptide reads, in one-letter code: Caltractin ICL1f (183 aa).

Positions 1 to 19 (MARRGQQPPQQQQQAQPAQ) are enriched in low complexity. Residues 1–30 (MARRGQQPPQQQQQAQPAQKNQAGKFNPAE) form a disordered region. EF-hand domains follow at residues 39 to 74 (EEVL…LGFE), 75 to 110 (AKNQ…RISE), 112 to 147 (DSKA…LGET), and 148 to 183 (MDDS…KTFA). 10 residues coordinate Ca(2+): Asp52, Asp54, Thr56, Ser58, Glu63, Asp88, Asp90, Ser92, Gln94, and Glu99.

The protein belongs to the centrin family. Monomer.

The protein resides in the cytoplasm. It is found in the cytoskeleton. Plays a fundamental role in microtubule organizing center structure and function. Component of the infraciliary lattice (ICL) and the ciliary basal bodies. The protein is Caltractin ICL1f (Icl1f) of Paramecium tetraurelia.